The following is a 201-amino-acid chain: Regulator of G-protein signaling 1 (201 aa).

The RGS domain occupies 75 to 191; that stretch reads SLEKLLVSEE…LKSEIFFRLA (117 aa).

It is found in the cell membrane. The protein localises to the cytoplasm. Its subcellular location is the cytosol. Its function is as follows. Regulates G protein-coupled receptor signaling cascades, including signaling downstream of the N-formylpeptide chemoattractant receptors and leukotriene receptors. Inhibits B cell chemotaxis. Inhibits signal transduction by increasing the GTPase activity of G protein alpha subunits, thereby driving them into their inactive GDP-bound form. This Xenopus laevis (African clawed frog) protein is Regulator of G-protein signaling 1 (rgs1).